A 420-amino-acid chain; its full sequence is L-rhamnose isomerase (420 aa).

Residues His264, Asp296, and Asp298 each coordinate Mn(2+).

It belongs to the rhamnose isomerase family. It depends on Mn(2+) as a cofactor.

The protein resides in the cytoplasm. The enzyme catalyses L-rhamnopyranose = L-rhamnulose. It functions in the pathway carbohydrate degradation; L-rhamnose degradation; glycerone phosphate from L-rhamnose: step 1/3. Functionally, catalyzes the interconversion of L-rhamnose and L-rhamnulose. This is L-rhamnose isomerase from Listeria innocua serovar 6a (strain ATCC BAA-680 / CLIP 11262).